Consider the following 408-residue polypeptide: LL-diaminopimelate aminotransferase (408 aa).

Positions 15 and 42 each coordinate substrate. Pyridoxal 5'-phosphate is bound by residues Tyr-72, 108-109, Tyr-132, Asn-187, Tyr-218, and 246-248; these read SK and SFS. Positions 109, 132, and 187 each coordinate substrate. Residue Lys-249 is modified to N6-(pyridoxal phosphate)lysine. Pyridoxal 5'-phosphate contacts are provided by Arg-257 and Asn-292. Substrate-binding residues include Asn-292 and Arg-388.

Belongs to the class-I pyridoxal-phosphate-dependent aminotransferase family. LL-diaminopimelate aminotransferase subfamily. As to quaternary structure, homodimer. Pyridoxal 5'-phosphate serves as cofactor.

The catalysed reaction is (2S,6S)-2,6-diaminopimelate + 2-oxoglutarate = (S)-2,3,4,5-tetrahydrodipicolinate + L-glutamate + H2O + H(+). It participates in amino-acid biosynthesis; L-lysine biosynthesis via DAP pathway; LL-2,6-diaminopimelate from (S)-tetrahydrodipicolinate (aminotransferase route): step 1/1. Its function is as follows. Involved in the synthesis of meso-diaminopimelate (m-DAP or DL-DAP), required for both lysine and peptidoglycan biosynthesis. Catalyzes the direct conversion of tetrahydrodipicolinate to LL-diaminopimelate. The polypeptide is LL-diaminopimelate aminotransferase (Prochlorococcus marinus (strain MIT 9313)).